A 339-amino-acid polypeptide reads, in one-letter code: Cathepsin B (339 aa).

The N-terminal stretch at 1-17 (MWWSLILLSCLLALTSA) is a signal peptide. A propeptide spans 18–79 (HDKPSFHPLS…GRVAFGEDID (62 aa)) (activation peptide). Disulfide bonds link C93/C122, C105/C150, C141/C207, C142/C146, C179/C211, and C187/C198. C108 is a catalytic residue. N-linked (GlcNAc...) asparagine glycosylation occurs at N192. N6-acetyllysine is present on K220. Residues H278 and N298 contribute to the active site. Positions 334–339 (QYWGRF) are excised as a propeptide.

This sequence belongs to the peptidase C1 family. In terms of assembly, dimer of a heavy chain and a light chain cross-linked by a disulfide bond. Interacts with SRPX2. Directly interacts with SHKBP1. In terms of tissue distribution, expressed in thyroid epithelial cells.

The protein localises to the lysosome. It is found in the melanosome. Its subcellular location is the secreted. It localises to the extracellular space. The protein resides in the apical cell membrane. It catalyses the reaction Hydrolysis of proteins with broad specificity for peptide bonds. Preferentially cleaves -Arg-Arg-|-Xaa bonds in small molecule substrates (thus differing from cathepsin L). In addition to being an endopeptidase, shows peptidyl-dipeptidase activity, liberating C-terminal dipeptides.. Its function is as follows. Thiol protease which is believed to participate in intracellular degradation and turnover of proteins. Cleaves matrix extracellular phosphoglycoprotein MEPE. Involved in the solubilization of cross-linked TG/thyroglobulin in the thyroid follicle lumen. Has also been implicated in tumor invasion and metastasis. The protein is Cathepsin B (Ctsb) of Mus musculus (Mouse).